The chain runs to 524 residues: Ribonuclease Y (524 aa).

Residues 3-23 (IVINLFLLVPASIVFFAAGFF) form a helical membrane-spanning segment. Positions 96–127 (QQREGQLKKQAQDNRDMERRLQDQRKENEQVQ) are disordered. Over residues 100–124 (GQLKKQAQDNRDMERRLQDQRKENE) the composition is skewed to basic and acidic residues. Residues 214-280 (ALSVVHIQTD…KLTLQKLLSE (67 aa)) form the KH domain. The HD domain occupies 340–432 (LLQHSREVAM…VDAANVISLS (93 aa)).

It belongs to the RNase Y family.

The protein localises to the cell membrane. Endoribonuclease that initiates mRNA decay. This chain is Ribonuclease Y, found in Chlorobium phaeovibrioides (strain DSM 265 / 1930) (Prosthecochloris vibrioformis (strain DSM 265)).